The sequence spans 603 residues: Penicillin-binding protein activator LpoA (603 aa).

The first 26 residues, 1–26 (MANMTPRKNSVTRLIAPVALALTLAA), serve as a signal peptide directing secretion. Residue Cys27 is the site of N-palmitoyl cysteine attachment. Cys27 is lipidated: S-diacylglycerol cysteine.

It belongs to the LpoA family. As to quaternary structure, interacts with PBP1a.

The protein localises to the cell outer membrane. Regulator of peptidoglycan synthesis that is essential for the function of penicillin-binding protein 1A (PBP1a). The sequence is that of Penicillin-binding protein activator LpoA from Aliivibrio fischeri (strain ATCC 700601 / ES114) (Vibrio fischeri).